A 2969-amino-acid chain; its full sequence is Histone-lysine N-methyltransferase ASH1L (2969 aa).

2 disordered regions span residues 1–70 (MDPR…TDAQ) and 118–143 (HPRK…RDPS). Positions 21 to 31 (KSPSAISTGTL) are enriched in polar residues. S22 is subject to Phosphoserine. Basic and acidic residues-rich tracts occupy residues 33 to 65 (SKRE…KDDG) and 127 to 143 (KMTD…RDPS). Residue K34 forms a Glycyl lysine isopeptide (Lys-Gly) (interchain with G-Cter in SUMO2) linkage. K375 is modified (N6-acetyllysine). K425 is covalently cross-linked (Glycyl lysine isopeptide (Lys-Gly) (interchain with G-Cter in SUMO2)). Positions 501–511 (IQQDSFSSSEK) are enriched in polar residues. Disordered stretches follow at residues 501–525 (IQQD…QPPV), 537–583 (ASDV…PNPL), 824–845 (YKPK…PPKR), 878–966 (KQGL…EMEP), 1100–1128 (SEIL…AGFV), 1151–1231 (MKKA…EHVS), and 1243–1281 (SLKE…QLRN). The span at 512–522 (GSYETSKHEKQ) shows a compositional bias: basic and acidic residues. The segment covering 554–579 (NLPSPSPTVSVNPLTRSPPETSSQLA) has biased composition (polar residues). Residues 887–897 (PKKRGRPKRQM) show a composition bias toward basic residues. A DNA-binding region (a.T hook 1) is located at residues 887–899 (PKKRGRPKRQMRS). The span at 920–932 (SKLESESDNHRSS) shows a compositional bias: basic and acidic residues. Over residues 936–949 (FESEDQLQDPDDLD) the composition is skewed to acidic residues. Composition is skewed to low complexity over residues 1100–1123 (SEIL…PVSS) and 1162–1175 (SPPT…SHLS). 2 positions are modified to phosphoserine: S1162 and S1170. Positions 1186–1211 (SPISESHSDETIPSDSGIGTDNNSTS) are enriched in polar residues. Q1220 is subject to N5-methylglutamine. 2 stretches are compositionally biased toward basic residues: residues 1246–1256 (EKHKHKCKRRN) and 1266–1277 (KRQKRKRKKKYP). The segment at residues 1347-1359 (KKKRGRPPKMREA) is a DNA-binding region (a.T hook 2). 3 disordered regions span residues 1489–1508 (HREH…GSSR), 1580–1711 (SESS…ASGD), and 1741–1761 (ASAP…TLGK). Polar residues-rich tracts occupy residues 1496–1508 (EQPQ…GSSR), 1580–1598 (SESS…SEPA), 1605–1622 (NLFT…PNSS), and 1650–1680 (LPSN…STNC). The segment covering 1741 to 1751 (ASAPPSSSPGR) has biased composition (low complexity). Residues 1847 to 1859 (KRRPGRPRKCPLQ) constitute a DNA-binding region (a.T hook 3). The segment at 1911 to 1991 (KKGLKRKGWL…PRPPKKKYQK (81 aa)) is disordered. Residues 2069–2288 (PDVPLYKKIR…KCRGIIGGKS (220 aa)) are catalytic domain. The AWS domain maps to 2091 to 2142 (YEATTCNCKKPDDDTRKGCVDDCLNRMIFAECSPNTCPCGEQCCNQRIQRHE). The 117-residue stretch at 2145-2261 (QCLERFRAEE…AGTELTYDYN (117 aa)) folds into the SET domain. Residues 2269 to 2285 (KQQLCKCGFEKCRGIIG) enclose the Post-SET domain. The tract at residues 2288–2346 (SQRVNGLTSSKNSQPMATHKKSGRSKEKRKSKHKLKKRRGHLSEEPSENINTPTRLTPQ) is disordered. Positions 2289 to 2303 (QRVNGLTSSKNSQPM) are enriched in polar residues. The segment covering 2305–2327 (THKKSGRSKEKRKSKHKLKKRRG) has biased composition (basic residues). Residues K2317, K2319, and K2323 each carry the N6-acetyllysine modification. Residues 2335-2346 (ENINTPTRLTPQ) show a composition bias toward polar residues. The 107-residue stretch at 2444–2550 (RLAQIFKEIC…KAYYNARHEA (107 aa)) folds into the Bromo domain. The PHD-type zinc finger occupies 2585 to 2631 (VIRCICGLYKDEGLMIQCDKCMVWQHCDCMGVNSDVEHYLCEQCDPR). In terms of domain architecture, BAH spans 2661-2798 (LLLRQGDCVY…KSAHLFYKIH (138 aa)). Disordered stretches follow at residues 2825-2856 (SPHY…DLGQ) and 2876-2919 (NEIP…RRHN). Over residues 2842-2855 (WKSERSKPPLKDLG) the composition is skewed to basic and acidic residues.

This sequence belongs to the class V-like SAM-binding methyltransferase superfamily. Histone-lysine methyltransferase family. SET2 subfamily. In terms of processing, methylated at Gln-1220 by N6AMT1. In terms of tissue distribution, widely expressed, with highest level in brain, heart and kidney.

It is found in the nucleus. It localises to the cell junction. Its subcellular location is the tight junction. The protein resides in the chromosome. The catalysed reaction is L-lysyl(36)-[histone H3] + 3 S-adenosyl-L-methionine = N(6),N(6),N(6)-trimethyl-L-lysyl(36)-[histone H3] + 3 S-adenosyl-L-homocysteine + 3 H(+). It catalyses the reaction L-lysyl(9)-[histone H3] + S-adenosyl-L-methionine = N(6)-methyl-L-lysyl(9)-[histone H3] + S-adenosyl-L-homocysteine + H(+). Its function is as follows. Histone methyltransferase specifically trimethylating 'Lys-36' of histone H3 forming H3K36me3. Also monomethylates 'Lys-9' of histone H3 (H3K9me1) in vitro. The physiological significance of the H3K9me1 activity is unclear. The chain is Histone-lysine N-methyltransferase ASH1L (ASH1L) from Homo sapiens (Human).